The sequence spans 147 residues: MLADAEWNEKKVLDRRTSRDHVLKGVSGGFAQLCHGKEAPLKRMNPDDWIIYYSPKQNLKDDAPYQKFTAVGEVSDNRVYKVHAGEGFSPYRRKINFLKCRETPIHPFIPNLSFIKNKRHWGYSFRFGHIEISEHDFKLIVKQMVKI.

Belongs to the UPF0310 family.

In Bacillus licheniformis, this protein is UPF0310 protein in gntR 5'region (oug).